Reading from the N-terminus, the 526-residue chain is GMP synthase [glutamine-hydrolyzing] (526 aa).

The Glutamine amidotransferase type-1 domain occupies 8-208 (CILIIDFGSQ…AVDICRCEVT (201 aa)). C85 acts as the Nucleophile in catalysis. Residues H182 and E184 contribute to the active site. In terms of domain architecture, GMPS ATP-PPase spans 209–401 (WKPVYIVKNI…LGLPLNVVNQ (193 aa)). Residue 236-242 (SGGIDSL) coordinates ATP.

As to quaternary structure, homodimer.

The catalysed reaction is XMP + L-glutamine + ATP + H2O = GMP + L-glutamate + AMP + diphosphate + 2 H(+). It functions in the pathway purine metabolism; GMP biosynthesis; GMP from XMP (L-Gln route): step 1/1. In terms of biological role, catalyzes the synthesis of GMP from XMP. The protein is GMP synthase [glutamine-hydrolyzing] of Blochmanniella floridana.